Consider the following 60-residue polypeptide: Large ribosomal subunit protein uL30 (60 aa).

Belongs to the universal ribosomal protein uL30 family. As to quaternary structure, part of the 50S ribosomal subunit.

The polypeptide is Large ribosomal subunit protein uL30 (Bacillus cereus (strain G9842)).